An 82-amino-acid chain; its full sequence is Beta-defensin 119 (82 aa).

Residues 1–19 form the signal peptide; sequence MKFFLFFVILLAMEPVISG. Cystine bridges form between Cys26/Cys53, Cys33/Cys47, and Cys37/Cys54.

The protein belongs to the beta-defensin family.

The protein localises to the secreted. Its function is as follows. Has antibacterial activity. In Canis lupus familiaris (Dog), this protein is Beta-defensin 119 (DEFB119).